The sequence spans 339 residues: Nitrilase 2 (339 aa).

Ser-2 carries the N-acetylserine modification. In terms of domain architecture, CN hydrolase spans 18–290; that stretch reads VRATIVQAST…EGLITADLDL (273 aa). The Proton acceptor role is filled by Glu-58. Lys-145 (proton donor) is an active-site residue. Cys-179 functions as the Nucleophile in the catalytic mechanism.

Belongs to the carbon-nitrogen hydrolase superfamily. Nitrilase family.

It is found in the cell membrane. It carries out the reaction a nitrile + 2 H2O = a carboxylate + NH4(+). Its function is as follows. Can convert indole-3-acetonitrile to the plant hormone indole-3-acetic acid. This Arabidopsis thaliana (Mouse-ear cress) protein is Nitrilase 2 (NIT2).